Reading from the N-terminus, the 74-residue chain is Beta-defensin 39 (74 aa).

The signal sequence occupies residues 1 to 23 (MKISYFLLLILSLGSSQINPVSG). 3 cysteine pairs are disulfide-bonded: cysteine 29/cysteine 58, cysteine 36/cysteine 51, and cysteine 41/cysteine 59.

It belongs to the beta-defensin family. As to expression, only expressed in epididymis (caput, corpus and cauda).

The protein localises to the secreted. Its function is as follows. Has antibacterial activity. The sequence is that of Beta-defensin 39 (Defb39) from Mus musculus (Mouse).